The sequence spans 610 residues: Ubiquilin-like protein (610 aa).

Positions 31-105 (IRVIVKTPGN…IHVVIKSKHG (75 aa)) constitute a Ubiquitin-like domain. One can recognise a UBA domain in the interval 562–607 (QAPEVRFSKEMECLQAMGFVNYNANLQALIATDGDTNAAIYKLKSS).

This chain is Ubiquilin-like protein (Ubqlnl), found in Mus musculus (Mouse).